Reading from the N-terminus, the 313-residue chain is E3 ubiquitin-protein ligase SGIP1 (313 aa).

Residues 16–65 (REYSKEIPIDLLIEIFSRLSTGDIARCRCVSKIWSSVPRLRDFTELFLKI) enclose the F-box domain.

Interacts with SGS3 in cytoplasmic granules.

The protein localises to the cytoplasmic granule. It carries out the reaction S-ubiquitinyl-[E2 ubiquitin-conjugating enzyme]-L-cysteine + [acceptor protein]-L-lysine = [E2 ubiquitin-conjugating enzyme]-L-cysteine + N(6)-ubiquitinyl-[acceptor protein]-L-lysine.. Its pathway is protein degradation; proteasomal ubiquitin-dependent pathway. It functions in the pathway protein modification; protein ubiquitination. Functionally, E3 ubiquitin-protein ligase which triggers the ubiquitination and subsequent degradation of SGS3 in response to heat. Involved in the mechanisms necessary for quick response to heat and subsequent heritable transgenerational memory of heat acclimation (global warming) such as early flowering and attenuated immunity; this process includes epigenetic regulation as well as post-transcriptional gene silencing (PTGS). In response to heat, HSFA2 is activated and promotes the expression of REF6 which in turn derepresses HSFA2, thus establishing an inheritable feedback loop able to trigger SGIP1 and subsequent SGIP1-mediated SGS3 degradation; this prevents the biosynthesis of trans-acting siRNA (tasiRNA) and leads to the release of HTT5, which drives early flowering but attenuates immunity. The chain is E3 ubiquitin-protein ligase SGIP1 from Arabidopsis thaliana (Mouse-ear cress).